Here is a 251-residue protein sequence, read N- to C-terminus: Homeobox protein notochord (251 aa).

Over residues 1-14 (MPSPRPRGSPPPAP) the composition is skewed to pro residues. The interval 1-47 (MPSPRPRGSPPPAPSGSRVRPPRSGRSPAPRSPTGPNTPRAPGRFES) is disordered. A compositionally biased stretch (low complexity) spans 15–35 (SGSRVRPPRSGRSPAPRSPTG). The segment at residues 156–215 (QKRVRTMFNLEQLEELEKVFAKQHNLVGKKRAQLAARLKLTENQVRVWFQNRRVKYQKQQ) is a DNA-binding region (homeobox). A compositionally biased stretch (low complexity) spans 224–242 (AEAASLDEPSSSSIASIQS). A disordered region spans residues 224 to 251 (AEAASLDEPSSSSIASIQSDDAESGVDG).

The protein localises to the nucleus. In terms of biological role, transcription regulator acting downstream of both FOXA2 and Brachyury (T) during notochord development. Required for node morphogenesis. Is essential for cilia formation in the posterior notochord (PNC) and for left-right patterning; acts upstream of FOXJ1 and RFX3 in this process and is required for the expression of various components important for axonemal assembly and function. Plays a role in regulating axial versus paraxial cell fate. Activates the transcription of ciliary proteins C11orf97 homolog, FAM183B and SPACA9 in the embryonic ventral node. This Homo sapiens (Human) protein is Homeobox protein notochord (NOTO).